The following is a 153-amino-acid chain: Coiled-coil domain-containing protein 182 (153 aa).

A coiled-coil region spans residues 46–109; the sequence is ADLEILQQKV…RLREEEDRGI (64 aa).

This Homo sapiens (Human) protein is Coiled-coil domain-containing protein 182 (CCDC182).